The chain runs to 455 residues: MNPVSPRSLTMIGAGLAGCLLAILLSRRGWQITVYERRGDPRIKGYECGRSINLALAERGRHALRQAGAEEVVMAKAVMMRGRMVHPLVGEPQLQRYGRDDSEVIWSIHRAALNVALLDLAEQAGARVHFYRRLHTVDFDAGYARFIDDRDDQPHEIHFQSLIGSDGAGSALRAAMQRKSPLGERTEFLDHSYKELEIPPLPGGGFRIEGNALHIWPRGRYMFIALPNDGGTFTVTLFLPNAGEPSFATTRNGDEAFALFARDFPDALPLIPQLKQHWEEHPPGLLGTLTLDRWHLDGRALLIGDAAHAMVPFHGQGMNCAFEDCVALADQLDAHDDLASAFAAFEAARRDDAGAIQQMALENYLEMRDRVDDPEFLLQRQLEQQLQARWPTRFVPHYTMVTFLRTRYSIALARSEIQREILVEATRGHSDLSRLDWAALETIVHARLEPLDGAH.

This sequence belongs to the aromatic-ring hydroxylase family. KMO subfamily. Requires FAD as cofactor.

It catalyses the reaction L-kynurenine + NADPH + O2 + H(+) = 3-hydroxy-L-kynurenine + NADP(+) + H2O. Its pathway is cofactor biosynthesis; NAD(+) biosynthesis; quinolinate from L-kynurenine: step 1/3. Catalyzes the hydroxylation of L-kynurenine (L-Kyn) to form 3-hydroxy-L-kynurenine (L-3OHKyn). Required for synthesis of quinolinic acid. The sequence is that of Kynurenine 3-monooxygenase from Xanthomonas oryzae pv. oryzae (strain PXO99A).